The primary structure comprises 240 residues: Regulator of rDNA transcription 14 (240 aa).

Disordered stretches follow at residues 28–67 (QPLRSAKSTTSNKSKSASKFGNDRKALSMPTPLSSTQILS) and 215–240 (ISAPGLTPGLAPVDYDDDEEEEEEED). 2 stretches are compositionally biased toward low complexity: residues 32 to 46 (SAKSTTSNKSKSASK) and 58 to 67 (TPLSSTQILS). Residues 228–240 (DYDDDEEEEEEED) show a composition bias toward acidic residues.

Belongs to the RRT14 family.

The protein localises to the nucleus. The protein resides in the nucleolus. Functionally, involved in ribosome biogenesis, probably through modulation of rDNA transcription. The protein is Regulator of rDNA transcription 14 (RRT14) of Lodderomyces elongisporus (strain ATCC 11503 / CBS 2605 / JCM 1781 / NBRC 1676 / NRRL YB-4239) (Yeast).